A 474-amino-acid chain; its full sequence is Shugoshin-1 (474 aa).

4 disordered regions span residues 1-53 (MTST…KPNA), 189-226 (VESQSAVSSNTVCQEPPQDGKQKRMPQRRRSSRLNQGS), 322-356 (NSKQNHLTGSQSSLSFNTVDTPEPPEDNTVKRCSK), and 422-442 (VSMEQRTNQEQDGDCFSRKSN). Polar residues-rich tracts occupy residues 12–22 (GSLNPPHSNPS) and 190–201 (ESQSAVSSNTVC). Residues 211–220 (KRMPQRRRSS) are compositionally biased toward basic residues. 2 stretches are compositionally biased toward polar residues: residues 322-341 (NSKQNHLTGSQSSLSFNTVD) and 422-431 (VSMEQRTNQE).

This sequence belongs to the shugoshin family. Highly expressed in tissues containing meiocytes. Expressed at much lower level in leaves and pollen-containing flowers.

Its subcellular location is the nucleus. It localises to the chromosome. It is found in the centromere. Plays a central role in chromosome cohesion during meiosis I by preventing premature dissociation of cohesin complex from centromeres after prophase, when most of cohesin complex dissociates from chromosomes arms. Required for maintenance of centromeric cohesion before prophase II and correct segregation of chromatids during meiosis II. Has apparently no function in mitosis. This is Shugoshin-1 from Zea mays (Maize).